A 247-amino-acid polypeptide reads, in one-letter code: Carboxy-S-adenosyl-L-methionine synthase (247 aa).

S-adenosyl-L-methionine-binding positions include Tyr-39, Gly-64–Ser-66, Asp-89–Asn-90, Asp-117–Ile-118, Asn-132, and Arg-199.

This sequence belongs to the class I-like SAM-binding methyltransferase superfamily. Cx-SAM synthase family. Homodimer.

It catalyses the reaction prephenate + S-adenosyl-L-methionine = carboxy-S-adenosyl-L-methionine + 3-phenylpyruvate + H2O. Its function is as follows. Catalyzes the conversion of S-adenosyl-L-methionine (SAM) to carboxy-S-adenosyl-L-methionine (Cx-SAM). The polypeptide is Carboxy-S-adenosyl-L-methionine synthase (Cronobacter sakazakii (strain ATCC BAA-894) (Enterobacter sakazakii)).